We begin with the raw amino-acid sequence, 626 residues long: UvrABC system protein C (626 aa).

The GIY-YIG domain occupies 20–97; it reads ECSGVYKMLD…IKKFQPKFNI (78 aa). The UVR domain occupies 207–242; the sequence is IALQANLSKKMQELSSQMRFEEAAEIRDRIKALSYV.

The protein belongs to the UvrC family. In terms of assembly, interacts with UvrB in an incision complex.

Its subcellular location is the cytoplasm. The UvrABC repair system catalyzes the recognition and processing of DNA lesions. UvrC both incises the 5' and 3' sides of the lesion. The N-terminal half is responsible for the 3' incision and the C-terminal half is responsible for the 5' incision. The chain is UvrABC system protein C from Rickettsia prowazekii (strain Madrid E).